The chain runs to 363 residues: Cytoplasmic tRNA 2-thiolation protein 1 (363 aa).

Positions 337 to 363 (DGDCEQQATRSERNRSSLQGKHGNFDF) are disordered.

Belongs to the TtcA family. CTU1/NCS6/ATPBD3 subfamily.

Its subcellular location is the cytoplasm. Its pathway is tRNA modification; 5-methoxycarbonylmethyl-2-thiouridine-tRNA biosynthesis. Its function is as follows. Plays a central role in 2-thiolation of mcm(5)S(2)U at tRNA wobble positions of tRNA(Lys), tRNA(Glu) and tRNA(Gln). Directly binds tRNAs and probably acts by catalyzing adenylation of tRNAs, an intermediate required for 2-thiolation. It is unclear whether it acts as a sulfurtransferase that transfers sulfur from thiocarboxylated URM1 onto the uridine of tRNAs at wobble position. In Oryza sativa subsp. japonica (Rice), this protein is Cytoplasmic tRNA 2-thiolation protein 1.